Here is a 1631-residue protein sequence, read N- to C-terminus: ALK tyrosine kinase receptor (1631 aa).

The N-terminal stretch at Met1 to Ala18 is a signal peptide. The Extracellular portion of the chain corresponds to Ser19–Ser1053. Positions Gly20–Arg53 are disordered. A compositionally biased stretch (gly residues) spans Ser21–Gln39. The tract at residues Arg60–Asp82 is heparin-binding region. 10 N-linked (GlcNAc...) asparagine glycosylation sites follow: Asn185, Asn260, Asn301, Asn340, Asn427, Asn440, Asn461, Asn579, Asn587, and Asn643. Positions Leu280–Glu443 constitute an MAM 1 domain. Residues Phe494–Leu652 enclose the MAM 2 domain. Cys703 and Cys716 are joined by a disulfide. Asn724 carries N-linked (GlcNAc...) asparagine glycosylation. A disulfide bond links Cys798 and Cys809. N-linked (GlcNAc...) asparagine glycans are attached at residues Asn823, Asn878, Asn879, and Asn901. Residues Cys921 and Cys943 are joined by a disulfide bond. Residue Asn1001 is glycosylated (N-linked (GlcNAc...) asparagine). 3 cysteine pairs are disulfide-bonded: Cys1002–Cys1010, Cys1005–Cys1021, and Cys1023–Cys1036. The EGF-like stretch occupies residues Cys1002–Pro1040. The chain crosses the membrane as a helical span at residues Val1054 to Tyr1074. At Arg1075–Pro1631 the chain is on the cytoplasmic side. Residues Ile1131–Val1407 enclose the Protein kinase domain. Residues Leu1137 to Val1145 and Lys1165 contribute to the ATP site. Catalysis depends on Asp1264, which acts as the Proton acceptor. Disordered regions lie at residues Glu1423–Asn1493, Trp1526–Ser1554, and Phe1609–Pro1631.

As to quaternary structure, homodimer; homodimerizes following heparin- and ligand-binding. Interacts with CBL, IRS1, PIK3R1 and PLCG1. Interacts with FRS2 and SHC1. Interacts with PTN and MDK. Phosphorylated at tyrosine residues by autocatalysis, which activates kinase activity. In cells not stimulated by a ligand, receptor protein tyrosine phosphatase beta and zeta complex (PTPRB/PTPRZ1) dephosphorylates ALK at the sites in ALK that are undergoing autophosphorylation through autoactivation.

Its subcellular location is the cell membrane. It carries out the reaction L-tyrosyl-[protein] + ATP = O-phospho-L-tyrosyl-[protein] + ADP + H(+). With respect to regulation, activated upon ALKAL2 ligand-binding. ALKAL2-driven activation is coupled with heparin-binding. Following ligand-binding, homodimerizes and autophosphorylates, activating its kinase activity. Inactivated through dephosphorylation by receptor protein tyrosine phosphatase beta and zeta complex (PTPRB/PTPRZ1) when there is no stimulation by a ligand. In terms of biological role, neuronal receptor tyrosine kinase that is essentially and transiently expressed in specific regions of the central and peripheral nervous systems and plays an important role in the genesis and differentiation of the nervous system. Also acts as a key thinness protein involved in the resistance to weight gain: in hypothalamic neurons, controls energy expenditure acting as a negative regulator of white adipose tissue lipolysis and sympathetic tone to fine-tune energy homeostasis. Following activation by ALKAL2 ligand at the cell surface, transduces an extracellular signal into an intracellular response. In contrast, ALKAL1 is not a potent physiological ligand for ALK. Ligand-binding to the extracellular domain induces tyrosine kinase activation, leading to activation of the mitogen-activated protein kinase (MAPK) pathway. Phosphorylates almost exclusively at the first tyrosine of the Y-x-x-x-Y-Y motif. Induces tyrosine phosphorylation of CBL, FRS2, IRS1 and SHC1, as well as of the MAP kinases MAPK1/ERK2 and MAPK3/ERK1. ALK activation may also be regulated by pleiotrophin (PTN) and midkine (MDK). PTN-binding induces MAPK pathway activation, which is important for the anti-apoptotic signaling of PTN and regulation of cell proliferation. MDK-binding induces phosphorylation of the ALK target insulin receptor substrate (IRS1), activates mitogen-activated protein kinases (MAPKs) and PI3-kinase, resulting also in cell proliferation induction. Drives NF-kappa-B activation, probably through IRS1 and the activation of the AKT serine/threonine kinase. Recruitment of IRS1 to activated ALK and the activation of NF-kappa-B are essential for the autocrine growth and survival signaling of MDK. This Canis lupus familiaris (Dog) protein is ALK tyrosine kinase receptor.